Reading from the N-terminus, the 352-residue chain is C-C chemokine receptor type 5 (352 aa).

Over 1 to 30 the chain is Extracellular; that stretch reads MDYQVSSPTYDIDYYTSEPCQKVNVKQIAA. Tyrosine 3 carries the sulfotyrosine modification. O-linked (GalNAc...) serine glycosylation is found at serine 6 and serine 7. A sulfotyrosine mark is found at tyrosine 10, tyrosine 14, and tyrosine 15. 2 disulfide bridges follow: cysteine 20–cysteine 269 and cysteine 101–cysteine 178. Residues 31–58 traverse the membrane as a helical segment; the sequence is RLLPPLYSLVFIFGFVGNILVVLILINC. The Cytoplasmic segment spans residues 59 to 68; the sequence is KRLKSMTDIY. The chain crosses the membrane as a helical span at residues 69-89; that stretch reads LLNLAISDLFFLLTVPFWAHY. At 90–102 the chain is on the extracellular side; it reads AAAQWDFGNTMCQ. Residues 103–124 traverse the membrane as a helical segment; it reads LLTGLYFIGFFSGIFFIILLTI. Over 125–141 the chain is Cytoplasmic; it reads DRYLAIVHAVFALKART. A helical membrane pass occupies residues 142 to 166; it reads VTFGVVTSVITWVVAVFASLPGIIF. Topologically, residues 167-198 are extracellular; the sequence is TRSQREGLHYTCSSHFPYSQYQFWKNFQTLKI. The chain crosses the membrane as a helical span at residues 199–218; the sequence is VILGLVLPLLIMVICYSGIL. Residues 219–235 are Cytoplasmic-facing; sequence KTLLRCRNEKKRHRAVR. The helical transmembrane segment at 236–260 threads the bilayer; that stretch reads LIFTIMIVYFLFWAPYNIVLLLNTF. Topologically, residues 261–277 are extracellular; sequence QEFFGLNNCSSSNRLDQ. A helical transmembrane segment spans residues 278-301; that stretch reads AMQVTETLGMTHCCINPIIYAFVG. The Cytoplasmic segment spans residues 302 to 352; the sequence is EKFRNYLLVFFQKHIAKRFCKCCSIFQQEAPERASSVYTRSTGEHEISVGL. 3 S-palmitoyl cysteine lipidation sites follow: cysteine 321, cysteine 323, and cysteine 324. Phosphoserine; by BARK1 is present on residues serine 336, serine 337, serine 342, and serine 349.

It belongs to the G-protein coupled receptor 1 family. As to quaternary structure, interacts with PRAF2. Efficient ligand binding to CCL3/MIP-1alpha and CCL4/MIP-1beta requires sulfation, O-glycosylation and sialic acid modifications. Glycosylation on Ser-6 is required for efficient binding of CCL4. Interacts with GRK2. Interacts with ARRB1 and ARRB2. Interacts with CNIH4. Interacts with S100A4; this interaction stimulates T-lymphocyte chemotaxis. Sulfated on at least 2 of the N-terminal tyrosines. Sulfation is required for efficient binding of the chemokines, CCL3 and CCL4. In terms of processing, palmitoylation in the C-terminal is important for cell surface expression. Post-translationally, phosphorylation on serine residues in the C-terminal is stimulated by binding CC chemokines especially by APO-RANTES. O-glycosylated, but not N-glycosylated. Ser-6 appears to be the major site even if Ser-7 may be also O-glycosylated. Also sialylated glycans present which contribute to chemokine binding. Thr-16 and Ser-17 may also be glycosylated and, if so, with small moieties such as a T-antigen.

Its subcellular location is the cell membrane. Its function is as follows. Receptor for a number of inflammatory CC-chemokines including CCL3/MIP-1-alpha, CCL4/MIP-1-beta and RANTES and subsequently transduces a signal by increasing the intracellular calcium ion level. May play a role in the control of granulocytic lineage proliferation or differentiation. Participates in T-lymphocyte migration to the infection site by acting as a chemotactic receptor. In Pygathrix nemaeus (Red-shanked douc langur), this protein is C-C chemokine receptor type 5 (CCR5).